Reading from the N-terminus, the 66-residue chain is Clarkitoxin-I-Mdum (66 aa).

Disulfide bonds link C3-C24, C17-C42, C46-C59, and C60-C65.

As to expression, expressed by the venom gland.

It is found in the secreted. Its function is as follows. No toxicity is observed upon intravenous or intracerebroventricular injection into mice. Has no cytotoxic activity towards C2C12 cells at 100 ug/ml. This is Clarkitoxin-I-Mdum from Micrurus dumerilii (Coral snake).